The primary structure comprises 482 residues: D-inositol 3-phosphate glycosyltransferase (482 aa).

Residue histidine 63 participates in 1D-myo-inositol 3-phosphate binding. Residues 69–70 and glycine 77 contribute to the UDP-N-acetyl-alpha-D-glucosamine site; that span reads QP. 1D-myo-inositol 3-phosphate-binding positions include 74-79, lysine 132, tyrosine 165, threonine 189, and arginine 209; that span reads DAGGMN. Positions 289, 294, and 355 each coordinate UDP-N-acetyl-alpha-D-glucosamine. Tyrosine 364, arginine 365, and alanine 367 together coordinate Mg(2+). UDP-N-acetyl-alpha-D-glucosamine contacts are provided by glutamate 377 and glutamate 385. Position 391 (threonine 391) interacts with Mg(2+).

The protein belongs to the glycosyltransferase group 1 family. MshA subfamily. In terms of assembly, homodimer.

The enzyme catalyses 1D-myo-inositol 3-phosphate + UDP-N-acetyl-alpha-D-glucosamine = 1D-myo-inositol 2-acetamido-2-deoxy-alpha-D-glucopyranoside 3-phosphate + UDP + H(+). Functionally, catalyzes the transfer of a N-acetyl-glucosamine moiety to 1D-myo-inositol 3-phosphate to produce 1D-myo-inositol 2-acetamido-2-deoxy-glucopyranoside 3-phosphate in the mycothiol biosynthesis pathway. The chain is D-inositol 3-phosphate glycosyltransferase from Salinispora tropica (strain ATCC BAA-916 / DSM 44818 / JCM 13857 / NBRC 105044 / CNB-440).